We begin with the raw amino-acid sequence, 111 residues long: Anti-adapter protein IraM (111 aa).

It belongs to the IraM/RssC family.

It localises to the cytoplasm. Involved in the stabilization of the sigma stress factor RpoS. This chain is Anti-adapter protein IraM, found in Cronobacter sakazakii (strain ATCC BAA-894) (Enterobacter sakazakii).